Here is a 523-residue protein sequence, read N- to C-terminus: Leucine-rich repeat-containing protein 27 (523 aa).

Residues 1–26 (MEDTSPQAVAEKAAKDPKAAKDLKDD) are disordered. The span at 12 to 26 (KAAKDPKAAKDLKDD) shows a compositional bias: basic and acidic residues. 5 LRR repeats span residues 55–76 (SSPV…FKIP), 77–98 (NLQQ…FFQL), 101–122 (NLTW…IGSH), 124–145 (HLKT…LGQV), and 147–168 (TLTA…IVQK). Disordered stretches follow at residues 206–236 (QYPV…ADFF) and 372–394 (REQT…HSNM). 2 stretches are compositionally biased toward basic and acidic residues: residues 227–236 (DQEKEKADFF) and 372–385 (REQT…RELS). Coiled-coil stretches lie at residues 335–374 (VHAN…WREQ) and 463–494 (MQDI…TLNK). Positions 503–523 (GNLSLHPPASQPQNIFFNTKS) are disordered. A compositionally biased stretch (polar residues) spans 513–523 (QPQNIFFNTKS).

The protein is Leucine-rich repeat-containing protein 27 (Lrrc27) of Mus musculus (Mouse).